Reading from the N-terminus, the 85-residue chain is UPF0335 protein BARBAKC583_0130 (85 aa).

It belongs to the UPF0335 family.

The polypeptide is UPF0335 protein BARBAKC583_0130 (Bartonella bacilliformis (strain ATCC 35685 / KC583 / Herrer 020/F12,63)).